The sequence spans 415 residues: 3-isopropylmalate dehydratase large subunit (415 aa).

Residues Cys295, Cys353, and Cys356 each coordinate [4Fe-4S] cluster.

This sequence belongs to the aconitase/IPM isomerase family. LeuC type 2 subfamily. As to quaternary structure, heterodimer of LeuC and LeuD. [4Fe-4S] cluster serves as cofactor.

The catalysed reaction is (2R,3S)-3-isopropylmalate = (2S)-2-isopropylmalate. It participates in amino-acid biosynthesis; L-leucine biosynthesis; L-leucine from 3-methyl-2-oxobutanoate: step 2/4. Functionally, catalyzes the isomerization between 2-isopropylmalate and 3-isopropylmalate, via the formation of 2-isopropylmaleate. The sequence is that of 3-isopropylmalate dehydratase large subunit from Pyrobaculum arsenaticum (strain DSM 13514 / JCM 11321 / PZ6).